A 203-amino-acid chain; its full sequence is Glycerol-3-phosphate acyltransferase (203 aa).

5 helical membrane passes run 4 to 24, 56 to 76, 80 to 100, 112 to 132, and 138 to 158; these read IAPGMIFLAYLCGSISSAILV, VAVLVFDVLKGMLPVWGAYML, PFWLGLIAIAACVGHIWPVFF, FGAIAPIGWDLTGVMAGTWLL, and GYSSLGAIVSALIAPFYVWWF.

It belongs to the PlsY family. Probably interacts with PlsX.

Its subcellular location is the cell inner membrane. It catalyses the reaction an acyl phosphate + sn-glycerol 3-phosphate = a 1-acyl-sn-glycero-3-phosphate + phosphate. The protein operates within lipid metabolism; phospholipid metabolism. Its function is as follows. Catalyzes the transfer of an acyl group from acyl-phosphate (acyl-PO(4)) to glycerol-3-phosphate (G3P) to form lysophosphatidic acid (LPA). This enzyme utilizes acyl-phosphate as fatty acyl donor, but not acyl-CoA or acyl-ACP. This is Glycerol-3-phosphate acyltransferase from Enterobacter sp. (strain 638).